Here is a 338-residue protein sequence, read N- to C-terminus: Phenylalanine--tRNA ligase alpha subunit (338 aa).

Position 252 (Glu-252) interacts with Mg(2+).

It belongs to the class-II aminoacyl-tRNA synthetase family. Phe-tRNA synthetase alpha subunit type 1 subfamily. In terms of assembly, tetramer of two alpha and two beta subunits. The cofactor is Mg(2+).

The protein localises to the cytoplasm. The enzyme catalyses tRNA(Phe) + L-phenylalanine + ATP = L-phenylalanyl-tRNA(Phe) + AMP + diphosphate + H(+). The sequence is that of Phenylalanine--tRNA ligase alpha subunit from Pseudomonas syringae pv. tomato (strain ATCC BAA-871 / DC3000).